The following is a 590-amino-acid chain: Probable serine/threonine-protein phosphatase PP2A regulatory subunit (590 aa).

HEAT repeat units follow at residues 37 to 73 (LSTI…VLAE), 74 to 111 (QLGN…DKAV), 113 to 150 (SLRK…TSAC), 151 to 188 (GLFS…RAAA), 189 to 227 (AKLG…LLTV), 228 to 266 (ESAI…YMVA), 267 to 305 (EKLI…CAAT), 306 to 344 (QRLQ…QLVK), 349 to 387 (GVIM…LNII), 388 to 426 (SSLD…LAIV), 427 to 465 (QFMP…EAST), 466 to 504 (LIMK…MTCL), 505 to 543 (FCLN…FNAA), and 544 to 582 (KSLK…YFSE).

It belongs to the phosphatase 2A regulatory subunit A family. As to quaternary structure, part of a complex consisting of a common heterodimeric core enzyme, composed of catalytic subunit let-92 and constant regulatory subunit paa-1, that associates with a variety of regulatory subunits which confer distinct properties to the holoenzyme. Interacts with rsa-1.

It localises to the cytoplasm. The protein resides in the cytoskeleton. Its subcellular location is the microtubule organizing center. The protein localises to the centrosome. It is found in the spindle. Acts as a scaffolding protein for phosphatase let-92 and its regulatory subunits. Probably together with let-92 and regulatory subunit sur-6, regulates centriole duplication, microtubule outgrowth and mitotic spindle stability during early embryonic cell division by preventing the degradation of sas-5 and kinase zyg-1. During vulva development, may play a role with phosphatase let-92 and regulatory subunit sur-6 in the induction of vulva cell precursors by positively regulating let-60/Ras-MAP kinase signaling, probably by promoting lin-45 activation. Plays a positive role in axon guidance probably by inhibiting phosphatase let-92. The polypeptide is Probable serine/threonine-protein phosphatase PP2A regulatory subunit (paa-1) (Caenorhabditis elegans).